The following is a 590-amino-acid chain: MTLHNNNTTSPLFPNISSSWIHGPSDTGLPPGTVTHFGSYNISRAAGNLSSPNGTTSDPLGGHTIWQVVFIAFLTGVLALVTIIGNILVIVAFKVNKQLKTVNNYFLLSLACADLIIGVISMNLFTTYIIMNRWALGNLACDLWLSIDYVASNASVMNLLVISFDRYFSITRPLTYRAKRTTKRAGVMIGLAWVISFILWAPAILFWQYFVGKRTVPPGECFIQFLSEPTITFGTAIAAFYMPVTIMTILYWRIYKETEKRTKELAGLQASGTEAEAENFVHPTGSSRSCSSYELQQQSMKRSARRKYGRCHFWFTTKSWKPSAEQMDQDHSSSDSWNNNDAAASLENSASSDEEDIGSETRAIYSIVLKLPGHSTILNSTKLPSSDNLQVPEEELGSVGLERKPSKLQTQQSMDDGGSFQKSFSKLPIQLESAVDTAKASDVNSSVGKTTATLPLSFKEATLAKRFALKTRSQITKRKRMSLIKEKKAAQTLSAILLAFIITWTPYNIMVLVNTFCDSCIPKTYWNLGYWLCYINSTVNPVCYALCNKTFRNTFKMLLLCQCDKRKRRKQQYQQRQSVIFHKRVPEQAL.

The Extracellular portion of the chain corresponds to 1-67 (MTLHNNNTTS…DPLGGHTIWQ (67 aa)). Asn6, Asn7, Asn15, Asn41, Asn48, and Asn53 each carry an N-linked (GlcNAc...) asparagine glycan. The helical transmembrane segment at 68-91 (VVFIAFLTGVLALVTIIGNILVIV) threads the bilayer. The Cytoplasmic segment spans residues 92 to 104 (AFKVNKQLKTVNN). The chain crosses the membrane as a helical span at residues 105–125 (YFLLSLACADLIIGVISMNLF). Residues 126 to 142 (TTYIIMNRWALGNLACD) lie on the Extracellular side of the membrane. A disulfide bridge connects residues Cys141 and Cys221. A helical transmembrane segment spans residues 143 to 164 (LWLSIDYVASNASVMNLLVISF). Over 165-184 (DRYFSITRPLTYRAKRTTKR) the chain is Cytoplasmic. The chain crosses the membrane as a helical span at residues 185–207 (AGVMIGLAWVISFILWAPAILFW). Residues 208–229 (QYFVGKRTVPPGECFIQFLSEP) are Extracellular-facing. The helical transmembrane segment at 230–252 (TITFGTAIAAFYMPVTIMTILYW) threads the bilayer. Residues 253–492 (RIYKETEKRT…LIKEKKAAQT (240 aa)) are Cytoplasmic-facing. The Basolateral sorting signal motif lies at 275-281 (AEAENFV). A disordered region spans residues 324 to 357 (AEQMDQDHSSSDSWNNNDAAASLENSASSDEEDI). Positions 334–345 (SDSWNNNDAAAS) are enriched in low complexity. Ser385 carries the post-translational modification Phosphoserine. The tract at residues 398 to 419 (SVGLERKPSKLQTQQSMDDGGS) is disordered. Over residues 407–419 (KLQTQQSMDDGGS) the composition is skewed to polar residues. The helical transmembrane segment at 493–513 (LSAILLAFIITWTPYNIMVLV) threads the bilayer. The Extracellular segment spans residues 514–527 (NTFCDSCIPKTYWN). A helical transmembrane segment spans residues 528–547 (LGYWLCYINSTVNPVCYALC). Topologically, residues 548–590 (NKTFRNTFKMLLLCQCDKRKRRKQQYQQRQSVIFHKRVPEQAL) are cytoplasmic.

Belongs to the G-protein coupled receptor 1 family. Muscarinic acetylcholine receptor subfamily. CHRM3 sub-subfamily. As to quaternary structure, homodimer; the dimers can form tetramers. Interacts with NALCN. Interacts with TMEM147.

It is found in the cell membrane. Its subcellular location is the postsynaptic cell membrane. The protein localises to the basolateral cell membrane. It localises to the endoplasmic reticulum membrane. Functionally, the muscarinic acetylcholine receptor mediates various cellular responses, including inhibition of adenylate cyclase, breakdown of phosphoinositides and modulation of potassium channels through the action of G proteins. Primary transducing effect is Pi turnover. The polypeptide is Muscarinic acetylcholine receptor M3 (CHRM3) (Bos taurus (Bovine)).